We begin with the raw amino-acid sequence, 171 residues long: Disulfide bond formation protein B (171 aa).

At 1–13 the chain is on the cytoplasmic side; sequence MSALTRFAQSRLA. A helical transmembrane segment spans residues 14–30; the sequence is WTLLLLTAVGLEACALF. At 31 to 48 the chain is on the periplasmic side; the sequence is FQHVMKLDPCVMCIYQRL. The cysteines at positions 40 and 43 are disulfide-linked. A helical transmembrane segment spans residues 49-64; it reads AVLGVLTAGLIGVVGH. The Cytoplasmic portion of the chain corresponds to 65-71; the sequence is QFRLLRF. The chain crosses the membrane as a helical span at residues 72–89; sequence LGVLLWGVSAAWGLKLAL. The Periplasmic portion of the chain corresponds to 90-144; it reads ELVEMQTNPSPFSTCSFLPEFPEWMPLHEWFPSVFLPTGMCTDIPWEMFGITMSQ. Cysteines 104 and 130 form a disulfide. Residues 145–163 traverse the membrane as a helical segment; it reads WMVVAFSTYLIALVVFIVP. The Cytoplasmic portion of the chain corresponds to 164–171; sequence ALMPTKKA.

The protein belongs to the DsbB family.

It localises to the cell inner membrane. Required for disulfide bond formation in some periplasmic proteins. Acts by oxidizing the DsbA protein. In Shewanella loihica (strain ATCC BAA-1088 / PV-4), this protein is Disulfide bond formation protein B.